We begin with the raw amino-acid sequence, 363 residues long: S-adenosylmethionine:tRNA ribosyltransferase-isomerase (363 aa).

It belongs to the QueA family. In terms of assembly, monomer.

The protein localises to the cytoplasm. It catalyses the reaction 7-aminomethyl-7-carbaguanosine(34) in tRNA + S-adenosyl-L-methionine = epoxyqueuosine(34) in tRNA + adenine + L-methionine + 2 H(+). Its pathway is tRNA modification; tRNA-queuosine biosynthesis. In terms of biological role, transfers and isomerizes the ribose moiety from AdoMet to the 7-aminomethyl group of 7-deazaguanine (preQ1-tRNA) to give epoxyqueuosine (oQ-tRNA). This is S-adenosylmethionine:tRNA ribosyltransferase-isomerase from Brucella melitensis biotype 2 (strain ATCC 23457).